The chain runs to 414 residues: TAR DNA-binding protein 43 (414 aa).

Residues Lys-79, Lys-84, Lys-95, Lys-102, and Lys-181 each participate in a glycyl lysine isopeptide (Lys-Gly) (interchain with G-Cter in SUMO2) cross-link. Residues 82–98 (KRKMDETDASSAVKVKR) carry the Nuclear localization signal motif. 2 RRM domains span residues 104 to 200 (SDLI…RCTE) and 191 to 262 (RKVF…NAEP). Ser-183 carries the post-translational modification Phosphoserine. Residues 216-414 (DVMDVFIPKP…MDSKSSGWGM (199 aa)) form an interaction with UBQLN2 region. Residues 239–250 (IAQSLCGEDLII) carry the Nuclear export signal motif. A compositionally biased stretch (basic and acidic residues) spans 261-274 (EPKHNSNRQLERSG). 2 disordered regions span residues 261 to 303 (EPKH…GNNQ) and 341 to 373 (ASQQ…GNNS). Lys-263 is covalently cross-linked (Glycyl lysine isopeptide (Lys-Gly) (interchain with G-Cter in SUMO2)). Residues 275–303 (RFGGNPGGFGNQGGFGNSRGGGAGLGNNQ) are compositionally biased toward gly residues. Phosphoserine is present on Ser-292. Arg-293 carries the post-translational modification Omega-N-methylarginine. Over residues 342-358 (SQQNQSGPSGNNQNQGN) the composition is skewed to low complexity.

Homodimer. Homooligomer (via its N-terminal domain). Interacts with BRDT. Binds specifically to pyrimidine-rich motifs of TAR DNA and to single stranded TG repeated sequences. Binds to RNA, specifically to UG repeated sequences with a minimum of six contiguous repeats. Interacts with ATXN2; the interaction is RNA-dependent. Interacts with MATR3. Interacts with UBQLN2. Interacts with HNRNPA2B1. Interacts with ZNF106. Interacts with CNOT7/CAF1. Interacts with CRY2. Interacts with PPIA/CYPA; the interaction is dependent on RNA-binding activity of TARDBP and PPIase activity of PPIA/CYPA and acetylation of PPIA/CYPA at 'Lys-125' favors the interaction. In terms of processing, hyperphosphorylated in hippocampus, neocortex, and spinal cord from individuals affected with ALS and FTLDU. Phosphorylated upon cellular stress. Ubiquitinated in hippocampus, neocortex, and spinal cord from individuals affected with ALS and FTLDU. Post-translationally, cleaved to generate C-terminal fragments in hippocampus, neocortex, and spinal cord from individuals affected with ALS and FTLDU. As to expression, ubiquitously expressed. In particular, expression is high in pancreas, placenta, lung, genital tract and spleen.

It is found in the nucleus. The protein localises to the cytoplasm. The protein resides in the stress granule. It localises to the mitochondrion. In terms of biological role, RNA-binding protein that is involved in various steps of RNA biogenesis and processing. Preferentially binds, via its two RNA recognition motifs RRM1 and RRM2, to GU-repeats on RNA molecules predominantly localized within long introns and in the 3'UTR of mRNAs. In turn, regulates the splicing of many non-coding and protein-coding RNAs including proteins involved in neuronal survival, as well as mRNAs that encode proteins relevant for neurodegenerative diseases. Plays a role in maintaining mitochondrial homeostasis by regulating the processing of mitochondrial transcripts. Also regulates mRNA stability by recruiting CNOT7/CAF1 deadenylase on mRNA 3'UTR leading to poly(A) tail deadenylation and thus shortening. In response to oxidative insult, associates with stalled ribosomes localized to stress granules (SGs) and contributes to cell survival. Also participates in the normal skeletal muscle formation and regeneration, forming cytoplasmic myo-granules and binding mRNAs that encode sarcomeric proteins. Plays a role in the maintenance of the circadian clock periodicity via stabilization of the CRY1 and CRY2 proteins in a FBXL3-dependent manner. Negatively regulates the expression of CDK6. Regulates the expression of HDAC6, ATG7 and VCP in a PPIA/CYPA-dependent manner. The chain is TAR DNA-binding protein 43 from Homo sapiens (Human).